Reading from the N-terminus, the 525-residue chain is 2,3-bisphosphoglycerate-independent phosphoglycerate mutase (525 aa).

Mn(2+) contacts are provided by aspartate 15 and serine 65. The active-site Phosphoserine intermediate is the serine 65. Substrate is bound by residues histidine 126, 156-157 (RD), arginine 188, arginine 194, 258-261 (RPDR), and lysine 331. Mn(2+)-binding residues include aspartate 398, histidine 402, aspartate 439, histidine 440, and histidine 457.

Belongs to the BPG-independent phosphoglycerate mutase family. Monomer. The cofactor is Mn(2+).

The enzyme catalyses (2R)-2-phosphoglycerate = (2R)-3-phosphoglycerate. The protein operates within carbohydrate degradation; glycolysis; pyruvate from D-glyceraldehyde 3-phosphate: step 3/5. In terms of biological role, catalyzes the interconversion of 2-phosphoglycerate and 3-phosphoglycerate. The chain is 2,3-bisphosphoglycerate-independent phosphoglycerate mutase from Picosynechococcus sp. (strain ATCC 27264 / PCC 7002 / PR-6) (Agmenellum quadruplicatum).